A 623-amino-acid polypeptide reads, in one-letter code: NADPH-dependent diflavin oxidoreductase 1 (623 aa).

In terms of domain architecture, Flavodoxin-like spans 7-168 (IVILYGSETG…VYFEYEKKVL (162 aa)). Residues 13–18 (SETGNA), 60–63 (STTG), 106–115 (LGDSSYPKFN), and aspartate 142 contribute to the FMN site. The FAD-binding FR-type domain maps to 224 to 491 (ESLKVGRVNI…VGPGVGLAPL (268 aa)). FAD is bound by residues arginine 383, 413-416 (RYYS), and 445-448 (GICT). Position 538-539 (538-539 (SR)) interacts with NADP(+). Tryptophan 623 lines the FAD pocket.

The protein belongs to the NADPH-dependent diflavin oxidoreductase NDOR1 family. In the N-terminal section; belongs to the flavodoxin family. This sequence in the C-terminal section; belongs to the flavoprotein pyridine nucleotide cytochrome reductase family. As to quaternary structure, interacts with DRE2; as part of the cytosolic iron-sulfur (Fe-S) protein assembly (CIA) machinery. FAD is required as a cofactor. FMN serves as cofactor.

The protein resides in the cytoplasm. It localises to the mitochondrion. It carries out the reaction 2 oxidized [2Fe-2S]-[protein] + NADPH = 2 reduced [2Fe-2S]-[protein] + NADP(+) + H(+). In terms of biological role, NADPH-dependent reductase which is a central component of the cytosolic iron-sulfur (Fe-S) protein assembly (CIA) machinery. Transfers electrons from NADPH via its FAD and FMN prosthetic groups to the [2Fe-2S] cluster of DRE2, another key component of the CIA machinery. In turn, this reduced cluster provides electrons for assembly of cytosolic iron-sulfur cluster proteins. Positively controls H(2)O(2)-induced cell death. The polypeptide is NADPH-dependent diflavin oxidoreductase 1 (Saccharomyces cerevisiae (strain ATCC 204508 / S288c) (Baker's yeast)).